The primary structure comprises 155 residues: FUN14 domain-containing protein 1 (155 aa).

Topologically, residues 1-47 (MASRNPPPQDYESDDESYEVLDLTEYARRHHWWNRVFGHSSGPMVEK) are cytoplasmic. A phosphoserine mark is found at Ser-13 and Ser-17. Tyr-18 carries the phosphotyrosine; by SRC modification. The YXXL motif lies at 18–21 (YEVL). The chain crosses the membrane as a helical span at residues 48-68 (YSVATQIVMGGVTGWCAGFLF). Over 69-74 (QKVGKL) the chain is Mitochondrial intermembrane. A helical membrane pass occupies residues 75–95 (AATAVGGGFLLLQVASHSGYV). Topologically, residues 96 to 133 (QIDWKRVEKDVNKAKRQIKKRANKAAPEINNIIEEATD) are cytoplasmic. Lys-119 is covalently cross-linked (Glycyl lysine isopeptide (Lys-Gly) (interchain with G-Cter in ubiquitin)). Residues 134 to 154 (FIKQNIVISSGFVGGFLLGLA) form a helical membrane-spanning segment. A topological domain (mitochondrial intermembrane) is located at residue Ser-155.

This sequence belongs to the FUN14 family. In terms of assembly, interacts (via YXXL motif) with MAP1 LC3 family proteins MAP1LC3A, MAP1LC3B and GABARAP. Interacts with DNM1L/DPR1. Interacts with GPX4. Phosphorylation at Ser-13 by CK2 and at Tyr-18 by SRC inhibits activation of mitophagy. Following hypoxia, dephosphorylated at Tyr-18, leading to interaction with MAP1 LC3 family proteins and triggering mitophagy. Dephosphorylation is mediated by PGAM5. Phosphorylated by ULK1 at Ser-17 which enhances FUNDC1 binding to LC3. In terms of processing, ubiquitinated on Lys-119. Deubiquitinated by USP19; leading to hypoxia-induced DRP1 oligomerization and GTPase activity.

It is found in the mitochondrion outer membrane. Its function is as follows. Integral mitochondrial outer-membrane protein that mediates the formation of mitochondria-associated endoplasmic reticulum membranes (MAMs). In turn, mediates angiogenesis and neoangiogenesis through interference with intracellular Ca(2+) communication and regulation of the vascular endothelial growth factor receptor KDR/VEGFR2 expression at both mRNA and protein levels. Also acts as an activator of hypoxia-induced mitophagy, an important mechanism for mitochondrial quality and homeostasis, by interacting with and recruiting LC3 protein family to mitochondria. Mechanistically, recruits DRP1 at ER-mitochondria contact sites leading to DRP1 oligomerization and GTPase activity to facilitate mitochondrial fission during hypoxia. Additionally, plays a role in hepatic ferroptosis by interacting directly with glutathione peroxidase/GPX4 to facilitate its recruitment into mitochondria through TOM/TIM complex where it is degraded by mitophagy. This Mus musculus (Mouse) protein is FUN14 domain-containing protein 1 (Fundc1).